The sequence spans 164 residues: MTTLTIEDLAVMLLPGQAIAGLDLGTKTIGLAMSDLGRRFATPRPVIKRVKFTQDAQTLLAFAEKEKVAAFVIGLPMNMDGSTGPRVQATRAFVRSMADKTALPFVYWDERLSTVAAERALLEMDVSRAKRAERIDSAAASFILQGALDRLSALGRPAFPDLDS.

It belongs to the YqgF nuclease family.

Its subcellular location is the cytoplasm. Functionally, could be a nuclease involved in processing of the 5'-end of pre-16S rRNA. The protein is Putative pre-16S rRNA nuclease of Rhizobium rhizogenes (strain K84 / ATCC BAA-868) (Agrobacterium radiobacter).